The following is a 401-amino-acid chain: Probable N-acetyl-gamma-glutamyl-phosphate reductase, chloroplastic (401 aa).

The transit peptide at 1–48 (MSTASAFSSIQGCWFKGERKIRVADKRAKRLTLGSHVASPSSMSFRVS) directs the protein to the chloroplast. Residue C205 is part of the active site.

It belongs to the NAGSA dehydrogenase family. Type 1 subfamily. In terms of assembly, homotetramer.

It localises to the plastid. The protein localises to the chloroplast. The enzyme catalyses N-acetyl-L-glutamate 5-semialdehyde + phosphate + NADP(+) = N-acetyl-L-glutamyl 5-phosphate + NADPH + H(+). It participates in amino-acid biosynthesis; L-arginine biosynthesis; N(2)-acetyl-L-ornithine from L-glutamate: step 3/4. The protein is Probable N-acetyl-gamma-glutamyl-phosphate reductase, chloroplastic of Arabidopsis thaliana (Mouse-ear cress).